Reading from the N-terminus, the 216-residue chain is Probable nicotinate-nucleotide adenylyltransferase (216 aa).

Belongs to the NadD family.

It carries out the reaction nicotinate beta-D-ribonucleotide + ATP + H(+) = deamido-NAD(+) + diphosphate. It functions in the pathway cofactor biosynthesis; NAD(+) biosynthesis; deamido-NAD(+) from nicotinate D-ribonucleotide: step 1/1. Functionally, catalyzes the reversible adenylation of nicotinate mononucleotide (NaMN) to nicotinic acid adenine dinucleotide (NaAD). This chain is Probable nicotinate-nucleotide adenylyltransferase, found in Desulfatibacillum aliphaticivorans.